Here is a 1362-residue protein sequence, read N- to C-terminus: DNA-directed RNA polymerase subunit beta (1362 aa).

It belongs to the RNA polymerase beta chain family. In terms of assembly, the RNAP catalytic core consists of 2 alpha, 1 beta, 1 beta' and 1 omega subunit. When a sigma factor is associated with the core the holoenzyme is formed, which can initiate transcription.

It catalyses the reaction RNA(n) + a ribonucleoside 5'-triphosphate = RNA(n+1) + diphosphate. Functionally, DNA-dependent RNA polymerase catalyzes the transcription of DNA into RNA using the four ribonucleoside triphosphates as substrates. The chain is DNA-directed RNA polymerase subunit beta from Parvibaculum lavamentivorans (strain DS-1 / DSM 13023 / NCIMB 13966).